A 1457-amino-acid polypeptide reads, in one-letter code: Receptor-type tyrosine-protein phosphatase kappa (1457 aa).

Residues 1–25 (MDVAAAALPAFVALWLLYPWPLLGS) form the signal peptide. Over 26–752 (ALGQFSAGGC…PAKQTDRVVK (727 aa)) the chain is Extracellular. Residues 30–193 (FSAGGCTFDD…IQVLSYPCDK (164 aa)) enclose the MAM domain. 3 N-linked (GlcNAc...) asparagine glycosylation sites follow: asparagine 100, asparagine 139, and asparagine 210. The region spanning 195–280 (PHFLRLGDVE…TQSERGSGVS (86 aa)) is the Ig-like C2-type domain. A disulfide bond links cysteine 215 and cysteine 269. Fibronectin type-III domains follow at residues 293 to 388 (PIAP…CAEP), 391 to 487 (TPKT…TDED), 490 to 594 (GPVP…SAPS), and 595 to 688 (LPDY…TVGD). N-linked (GlcNAc...) asparagine glycans are attached at residues asparagine 415, asparagine 423, asparagine 435, asparagine 461, asparagine 551, asparagine 585, asparagine 589, asparagine 606, and asparagine 689. The helical transmembrane segment at 753 to 774 (IAGISAGILVFILLLLVVIVIV) threads the bilayer. At 775 to 1457 (KKSKLAKKRK…DVALEYLESS (683 aa)) the chain is on the cytoplasmic side. Serine 868 is subject to Phosphoserine. 2 Tyrosine-protein phosphatase domains span residues 899–1159 (FKEE…ILEA) and 1191–1453 (LKDE…ALEY). Substrate is bound by residues aspartate 1068, 1100–1106 (CSAGAGR), and glutamine 1144. Cysteine 1100 (phosphocysteine intermediate) is an active-site residue. Cysteine 1394 functions as the Phosphocysteine intermediate in the catalytic mechanism.

It belongs to the protein-tyrosine phosphatase family. Receptor class 2B subfamily. In terms of processing, this protein undergoes proteolytic processing. As to expression, high levels in liver and kidney. Lower levels in lung, brain and heart. Not seen in spleen and testis.

It is found in the membrane. It carries out the reaction O-phospho-L-tyrosyl-[protein] + H2O = L-tyrosyl-[protein] + phosphate. In terms of biological role, regulation of processes involving cell contact and adhesion such as growth control, tumor invasion, and metastasis. Negative regulator of EGFR signaling pathway. Forms complexes with beta-catenin and gamma-catenin/plakoglobin. Beta-catenin may be a substrate for the catalytic activity of PTPRK/PTP-kappa. The polypeptide is Receptor-type tyrosine-protein phosphatase kappa (Ptprk) (Mus musculus (Mouse)).